A 104-amino-acid chain; its full sequence is DNA-directed RNA polymerase subunit Rpo13 (104 aa).

Disordered regions lie at residues 1 to 33 (MVSGMSTDEEKEGTSDEEVNEEKEVEETSEDEF) and 78 to 104 (RDSRRKAKKAVSKKVKKTKKKEKSVEG). Over residues 7-31 (TDEEKEGTSDEEVNEEKEVEETSED) the composition is skewed to acidic residues. The segment covering 80-104 (SRRKAKKAVSKKVKKTKKKEKSVEG) has biased composition (basic residues).

It belongs to the archaeal Rpo13 RNA polymerase subunit family. Part of the 13-subunit RNA polymerase complex.

Its subcellular location is the cytoplasm. It carries out the reaction RNA(n) + a ribonucleoside 5'-triphosphate = RNA(n+1) + diphosphate. DNA-dependent RNA polymerase (RNAP) catalyzes the transcription of DNA into RNA using the four ribonucleoside triphosphates as substrates. Probably binds dsDNA. This chain is DNA-directed RNA polymerase subunit Rpo13, found in Saccharolobus solfataricus (strain ATCC 35092 / DSM 1617 / JCM 11322 / P2) (Sulfolobus solfataricus).